Reading from the N-terminus, the 937-residue chain is Isoleucine--tRNA ligase (937 aa).

Positions Pro-58–His-68 match the 'HIGH' region motif. Glu-561 lines the L-isoleucyl-5'-AMP pocket. The 'KMSKS' region signature appears at Lys-602 to Ser-606. Position 605 (Lys-605) interacts with ATP. Residues Cys-900, Cys-903, Cys-920, and Cys-923 each coordinate Zn(2+).

The protein belongs to the class-I aminoacyl-tRNA synthetase family. IleS type 1 subfamily. Monomer. It depends on Zn(2+) as a cofactor.

Its subcellular location is the cytoplasm. The catalysed reaction is tRNA(Ile) + L-isoleucine + ATP = L-isoleucyl-tRNA(Ile) + AMP + diphosphate. Its function is as follows. Catalyzes the attachment of isoleucine to tRNA(Ile). As IleRS can inadvertently accommodate and process structurally similar amino acids such as valine, to avoid such errors it has two additional distinct tRNA(Ile)-dependent editing activities. One activity is designated as 'pretransfer' editing and involves the hydrolysis of activated Val-AMP. The other activity is designated 'posttransfer' editing and involves deacylation of mischarged Val-tRNA(Ile). This chain is Isoleucine--tRNA ligase, found in Pectobacterium carotovorum subsp. carotovorum (strain PC1).